Reading from the N-terminus, the 166-residue chain is MTLEERVEALEKELQEMKDIEAIKELKGKYFRCLDGKMWDELETTLSPNIVTSYSNGKLVFHSPKEVTDYLKSSMPKEEISMHMGHTPEITIDSETTATGRWYLEDRLIFTDGKYKDVGINGGAFYTDKYEKIDGQWYILETGYVRIYEEHFMRDPKIHITMNMHK.

In terms of assembly, homodimer.

The enzyme catalyses 7alpha,12alpha-dihydroxy-3-oxochol-4-en-24-oyl-CoA = 12alpha-hydroxy-3-oxochola-4,6-dien-24-oyl-CoA + H2O. It catalyses the reaction 7alpha-hydroxy-3-oxochol-4-en-24-oyl-CoA = 3-oxochol-4,6-dien-24-oyl-CoA + H2O. The catalysed reaction is 7alpha,12alpha-dihydroxy-3-oxochol-4-en-24-oate = 12alpha-hydroxy-3-oxochola-4,6-dien-24-oate + H2O. It carries out the reaction 7alpha-hydroxy-3-oxochol-4-en-24-oate = 3-oxochola-4,6-dien-24-oate + H2O. It participates in lipid metabolism; bile acid biosynthesis. Functions in the bile acid 7alpha-dehydroxylation pathway, which forms secondary bile acids via the 7alpha-dehydroxylation of primary bile acids, and is carried out by intestinal anaerobic bacteria. Catalyzes the dehydration step in this pathway, yielding a 3-oxo-Delta(4,6)-bile acid-CoA intermediate. In vitro, can act on the free bile acids (non CoA-conjugated) 7-alpha,12-alpha-dihydroxy-3-oxochol-4-enoate and 7-alpha-hydroxy-3-oxochol-4-enoate, but not on 7-alpha,12-alpha-dihydroxy-3-oxo-5-beta-cholanate, 3-alpha,7-alpha,12-alpha-trihydroxy-5-beta-cholanate or 7-beta-hydroxy-3-oxochol-4-enoate. The protein is Bile acid 7alpha-dehydratase of Clostridium scindens (strain JCM 10418 / VPI 12708).